The chain runs to 387 residues: Galanin receptor type 2 (387 aa).

Residues 1–28 (MNVSGCPGAGNASQAGGGGGWHPEAVIV) are Extracellular-facing. Residues Asn2 and Asn11 are each glycosylated (N-linked (GlcNAc...) asparagine). Residues 29–49 (PLLFALIFLVGTVGNTLVLAV) form a helical membrane-spanning segment. At 50-60 (LLRGGQAVSTT) the chain is on the cytoplasmic side. Residues 61-81 (NLFILNLGVADLCFILCCVPF) traverse the membrane as a helical segment. Over 82 to 99 (QATIYTLDGWVFGSLLCK) the chain is Extracellular. Cys98 and Cys175 are oxidised to a cystine. The helical transmembrane segment at 100–121 (AVHFLIFLTMHASSFTLAAVSL) threads the bilayer. Topologically, residues 122–141 (DRYLAIRYPLHSRELRTPRN) are cytoplasmic. The helical transmembrane segment at 142–162 (ALAAIGLIWGLSLLFSGPYLS) threads the bilayer. Residues 163–187 (YYRQSQLANLTVCHPAWSAPRRRAM) lie on the Extracellular side of the membrane. The helical transmembrane segment at 188–208 (DICTFVFSYLLPVLVLGLTYA) threads the bilayer. Residues 209–237 (RTLRYLWRAVDPVAAGSGARRAKRKVTRM) lie on the Cytoplasmic side of the membrane. The helical transmembrane segment at 238–258 (ILIVAALFCLCWMPHHALILC) threads the bilayer. Residues 259 to 260 (VW) are Extracellular-facing. Residues 261–281 (FGQFPLTRATYALRILSHLVS) form a helical membrane-spanning segment. The Cytoplasmic portion of the chain corresponds to 282-387 (YANSCVNPIV…GDSILTVDVA (106 aa)).

It belongs to the G-protein coupled receptor 1 family. As to expression, expressed abundantly within the central nervous system in both hypothalamus and hippocampus. In peripheral tissues, the strongest expression was observed in heart, kidney, liver, and small intestine.

It is found in the cell membrane. Functionally, receptor for the hormone galanin and GALP. Receptor for the hormone spexin-1. The activity of this receptor is mediated by G proteins that activate the phospholipase C/protein kinase C pathway (via G(q)) and that inhibit adenylyl cyclase (via G(i)). This Homo sapiens (Human) protein is Galanin receptor type 2 (GALR2).